We begin with the raw amino-acid sequence, 713 residues long: Serologically defined colon cancer antigen 8 (713 aa).

Ser-4 and Ser-28 each carry phosphoserine. The segment at 84–103 (QADKESEVSPSRRRKMSPLR) is disordered. Residues 129–175 (IHHLEAEVKFCKEELSGMKNKIQVVVLENEGLQQQLKSQRQEETLRE) are a coiled coil. The disordered stretch occupies residues 194–215 (EDSGVGETSKRPFSHDNADFGK). The segment covering 201–212 (TSKRPFSHDNAD) has biased composition (basic and acidic residues). Residues 216-713 (AASAGEQLEL…QLPSMPQSDC (498 aa)) are sufficient for homodimerization. 2 coiled-coil regions span residues 223–273 (LELE…LLAA) and 348–707 (EEAN…QLPS). The segment at 533 to 713 (HQLHLTRQEK…QLPSMPQSDC (181 aa)) is mediates interaction with OFD1.

Homodimer. Interacts with OFD1; the interaction is direct. Interacts with FAM161A. Interacts with RABEP2, ERC1 and CEP131. Expressed in thymus, prostate, testis, ovary, small intestine, colon, mucosa, colon and renal cancer tumors.

Its subcellular location is the cytoplasm. The protein localises to the cytoskeleton. It localises to the microtubule organizing center. It is found in the centrosome. The protein resides in the centriole. Its subcellular location is the cilium basal body. The protein localises to the cell junction. Functionally, plays a role in the establishment of cell polarity and epithelial lumen formation. Also plays an essential role in ciliogenesis and subsequent Hedgehog signaling pathway that requires the presence of intact primary cilia for pathway activation. Mechanistically, interacts with and mediates RABEP2 centrosomal localization which is critical for ciliogenesis. This is Serologically defined colon cancer antigen 8 (SDCCAG8) from Homo sapiens (Human).